Consider the following 2201-residue polypeptide: Genome polyprotein (2201 aa).

The N-myristoyl glycine; by host moiety is linked to residue glycine 2. The Cytoplasmic segment spans residues 2–1511 (GAQVSTQKTG…YVSRAFICLQ (1510 aa)). The amphipathic alpha-helix stretch occupies residues 566–582 (KLQGDVEEAIERARCTV). The short motif at 858–860 (RGD) is the Cell attachment site element. Residues histidine 888 and aspartate 906 each act as for protease 2A activity in the active site. Residues cysteine 923 and cysteine 925 each contribute to the Zn(2+) site. Cysteine 977 functions as the For protease 2A activity in the catalytic mechanism. Positions 983 and 985 each coordinate Zn(2+). The segment at 1117–1189 (NDSWLKKFTE…EQSAPSQSDQ (73 aa)) is membrane-binding. Residues 1117–1255 (NDSWLKKFTE…SPGAGKSVAT (139 aa)) are oligomerization. The tract at residues 1138 to 1142 (AIKIQ) is RNA-binding. One can recognise an SF3 helicase domain in the interval 1221–1377 (EKKMSNYIQF…SMYSQNGKIN (157 aa)). 3 residues coordinate Zn(2+): cysteine 1385, cysteine 1397, and cysteine 1402. A C4-type; degenerate zinc finger spans residues 1385 to 1402 (CDEECCPVNFKKCCPLVC). Residues 1429-1436 (EYNHRHSV) are RNA-binding. The tract at residues 1440–1445 (LEALFQ) is oligomerization. The stretch at 1512–1527 (AITTFVSVAGIIYIIY) is an intramembrane region. Topologically, residues 1528-2201 (KLFAGFQGAY…TLRRKWLDSF (674 aa)) are cytoplasmic. At tyrosine 1537 the chain carries O-(5'-phospho-RNA)-tyrosine. Residues 1557–1735 (GPAFEFAVAM…FSAALLKHYF (179 aa)) enclose the Peptidase C3 domain. Catalysis depends on for protease 3C activity residues histidine 1596, glutamate 1627, and cysteine 1703. The 117-residue stretch at 1966 to 2082 (GHLIAFDYSG…SYPWPIDASL (117 aa)) folds into the RdRp catalytic domain. Positions 1972 and 2068 each coordinate Mg(2+).

This sequence belongs to the picornaviruses polyprotein family. In terms of assembly, interacts with capsid protein VP1 and capsid protein VP3 to form heterotrimeric protomers. Interacts with capsid protein VP0, and capsid protein VP3 to form heterotrimeric protomers. Five protomers subsequently associate to form pentamers which serve as building blocks for the capsid. Interacts with capsid protein VP2, capsid protein VP3 and capsid protein VP4 following cleavage of capsid protein VP0. Interacts with host integrin heterodimer ITGAV/ITGB6. As to quaternary structure, interacts with capsid protein VP1 and capsid protein VP3 in the mature capsid. In terms of assembly, interacts with capsid protein VP0 and capsid protein VP1 to form heterotrimeric protomers. Five protomers subsequently associate to form pentamers which serve as building blocks for the capsid. Interacts with capsid protein VP4 in the mature capsid. Interacts with protein 2C; this interaction may be important for virion morphogenesis. Interacts with capsid protein VP1 and capsid protein VP3. As to quaternary structure, homodimer. In terms of assembly, homohexamer; forms a hexameric ring structure with 6-fold symmetry characteristic of AAA+ ATPases. Interacts (via N-terminus) with host RTN3 (via reticulon domain); this interaction is important for viral replication. Interacts with capsid protein VP3; this interaction may be important for virion morphogenesis. Interacts with protein 3CD. As to quaternary structure, homodimer. Interacts with host GBF1. Interacts (via GOLD domain) with host ACBD3 (via GOLD domain); this interaction allows the formation of a viral protein 3A/ACBD3 heterotetramer with a 2:2 stoichiometry, which will stimulate the recruitment of host PI4KB in order to synthesize PI4P at the viral RNA replication sites. In terms of assembly, interacts with RNA-directed RNA polymerase. Interacts with protein 3AB and with RNA-directed RNA polymerase. As to quaternary structure, interacts with Viral protein genome-linked and with protein 3CD. The cofactor is Mg(2+). In terms of processing, specific enzymatic cleavages in vivo by the viral proteases yield processing intermediates and the mature proteins. Post-translationally, myristoylation is required for the formation of pentamers during virus assembly. Further assembly of 12 pentamers and a molecule of genomic RNA generates the provirion. During virion maturation, immature virions are rendered infectious following cleavage of VP0 into VP4 and VP2. This maturation seems to be an autocatalytic event triggered by the presence of RNA in the capsid and it is followed by a conformational change infectious virion. In terms of processing, myristoylation is required during RNA encapsidation and formation of the mature virus particle. Post-translationally, VPg is uridylylated by the polymerase into VPg-pUpU. This acts as a nucleotide-peptide primer for the genomic RNA replication.

The protein resides in the virion. It is found in the host cytoplasm. The protein localises to the host cytoplasmic vesicle membrane. Its subcellular location is the host nucleus. The catalysed reaction is a ribonucleoside 5'-triphosphate + H2O = a ribonucleoside 5'-diphosphate + phosphate + H(+). It carries out the reaction Selective cleavage of Tyr-|-Gly bond in the picornavirus polyprotein.. It catalyses the reaction RNA(n) + a ribonucleoside 5'-triphosphate = RNA(n+1) + diphosphate. The enzyme catalyses Selective cleavage of Gln-|-Gly bond in the poliovirus polyprotein. In other picornavirus reactions Glu may be substituted for Gln, and Ser or Thr for Gly.. With respect to regulation, replication or transcription is subject to high level of random mutations by the nucleotide analog ribavirin. Forms an icosahedral capsid of pseudo T=3 symmetry with capsid proteins VP2 and VP3. The capsid is 300 Angstroms in diameter, composed of 60 copies of each capsid protein and enclosing the viral positive strand RNA genome. Capsid protein VP1 mainly forms the vertices of the capsid. Capsid protein VP1 interacts with host integrin ITGAV/ITGB6 to provide virion attachment to target host cells. This attachment induces virion internalization. Tyrosine kinases are probably involved in the entry process. After binding to its receptor, the capsid undergoes conformational changes. Capsid protein VP1 N-terminus (that contains an amphipathic alpha-helix) and capsid protein VP4 are externalized. Together, they shape a pore in the host membrane through which viral genome is translocated to host cell cytoplasm. In terms of biological role, forms an icosahedral capsid of pseudo T=3 symmetry with capsid proteins VP2 and VP3. The capsid is 300 Angstroms in diameter, composed of 60 copies of each capsid protein and enclosing the viral positive strand RNA genome. Functionally, lies on the inner surface of the capsid shell. After binding to the host receptor, the capsid undergoes conformational changes. Capsid protein VP4 is released, Capsid protein VP1 N-terminus is externalized, and together, they shape a pore in the host membrane through which the viral genome is translocated into the host cell cytoplasm. Its function is as follows. Component of immature procapsids, which is cleaved into capsid proteins VP4 and VP2 after maturation. Allows the capsid to remain inactive before the maturation step. Cysteine protease that cleaves viral polyprotein and specific host proteins. It is responsible for the autocatalytic cleavage between the P1 and P2 regions, which is the first cleavage occurring in the polyprotein. Also cleaves the host translation initiation factor EIF4G1, in order to shut down the capped cellular mRNA translation. Inhibits the host nucleus-cytoplasm protein and RNA trafficking by cleaving host members of the nuclear pores. Counteracts stress granule formation probably by antagonizing its assembly or promoting its dissassembly. Cleaves and inhibits host IFIH1/MDA5, thereby inhibiting the type-I IFN production and the establishment of the antiviral state. Cleaves and inhibits host MAVS, thereby inhibiting the type-I IFN production and the establishment of the antiviral state. In terms of biological role, plays an essential role in the virus replication cycle by acting as a viroporin. Creates a pore in the host endoplasmic reticulum and as a consequence releases Ca2+ in the cytoplasm of infected cell. In turn, high levels of cytoplasmic calcium may trigger membrane trafficking and transport of viral ER-associated proteins to viroplasms, sites of viral genome replication. Functionally, induces and associates with structural rearrangements of intracellular membranes. Displays RNA-binding, nucleotide binding and NTPase activities. May play a role in virion morphogenesis and viral RNA encapsidation by interacting with the capsid protein VP3. Its function is as follows. Localizes the viral replication complex to the surface of membranous vesicles. Together with protein 3CD binds the Cis-Active RNA Element (CRE) which is involved in RNA synthesis initiation. Acts as a cofactor to stimulate the activity of 3D polymerase, maybe through a nucleid acid chaperone activity. Localizes the viral replication complex to the surface of membranous vesicles. It inhibits host cell endoplasmic reticulum-to-Golgi apparatus transport and causes the disassembly of the Golgi complex, possibly through GBF1 interaction. This would result in depletion of MHC, trail receptors and IFN receptors at the host cell surface. Plays an essential role in viral RNA replication by recruiting ACBD3 and PI4KB at the viral replication sites, thereby allowing the formation of the rearranged membranous structures where viral replication takes place. In terms of biological role, acts as a primer for viral RNA replication and remains covalently bound to viral genomic RNA. VPg is uridylylated prior to priming replication into VPg-pUpU. The oriI viral genomic sequence may act as a template for this. The VPg-pUpU is then used as primer on the genomic RNA poly(A) by the RNA-dependent RNA polymerase to replicate the viral genome. During genome replication, the VPg-RNA linkage is removed by the host TDP2, thereby accelerating replication. During the late stage of the replication cycle, host TDP2 is excluded from sites of viral RNA synthesis and encapsidation, allowing for the generation of progeny virions. Functionally, involved in the viral replication complex and viral polypeptide maturation. It exhibits protease activity with a specificity and catalytic efficiency that is different from protease 3C. Protein 3CD lacks polymerase activity. Protein 3CD binds to the 5'UTR of the viral genome. Its function is as follows. Replicates the viral genomic RNA on the surface of intracellular membranes. May form linear arrays of subunits that propagate along a strong head-to-tail interaction called interface-I. Covalently attaches UMP to a tyrosine of VPg, which is used to prime RNA synthesis. The positive stranded RNA genome is first replicated at virus induced membranous vesicles, creating a dsRNA genomic replication form. This dsRNA is then used as template to synthesize positive stranded RNA genomes. ss(+)RNA genomes are either translated, replicated or encapsidated. Major viral protease that mediates proteolytic processing of the polyprotein. Cleaves host EIF5B, contributing to host translation shutoff. Also cleaves host PABPC1, contributing to host translation shutoff. Cleaves host NLRP1, triggers host N-glycine-mediated degradation of the autoinhibitory NLRP1 N-terminal fragment. This chain is Genome polyprotein, found in Coxsackievirus A9 (strain Griggs).